Consider the following 690-residue polypeptide: Methionine--tRNA ligase (690 aa).

The 'HIGH' region motif lies at 20-30 (PYANGSIHLGH). Residues Cys-151, Cys-154, Cys-164, and Cys-167 each contribute to the Zn(2+) site. Residues 337–341 (KMSKS) carry the 'KMSKS' region motif. Lys-340 contacts ATP. Residues 589–690 (DFAKVDLRIA…EGAQPGMRVM (102 aa)) enclose the tRNA-binding domain.

Belongs to the class-I aminoacyl-tRNA synthetase family. MetG type 1 subfamily. Homodimer. It depends on Zn(2+) as a cofactor.

The protein resides in the cytoplasm. The enzyme catalyses tRNA(Met) + L-methionine + ATP = L-methionyl-tRNA(Met) + AMP + diphosphate. Is required not only for elongation of protein synthesis but also for the initiation of all mRNA translation through initiator tRNA(fMet) aminoacylation. The polypeptide is Methionine--tRNA ligase (Vibrio vulnificus (strain CMCP6)).